The primary structure comprises 331 residues: Adenosine deaminase (331 aa).

The Zn(2+) site is built by H12 and H14. Substrate is bound by residues H14, D16, and G170. Residue H197 participates in Zn(2+) binding. E200 acts as the Proton donor in catalysis. Residue D278 participates in Zn(2+) binding. D279 is a substrate binding site.

It belongs to the metallo-dependent hydrolases superfamily. Adenosine and AMP deaminases family. Adenosine deaminase subfamily. Zn(2+) is required as a cofactor.

The enzyme catalyses adenosine + H2O + H(+) = inosine + NH4(+). It catalyses the reaction 2'-deoxyadenosine + H2O + H(+) = 2'-deoxyinosine + NH4(+). Its function is as follows. Catalyzes the hydrolytic deamination of adenosine and 2-deoxyadenosine. This chain is Adenosine deaminase, found in Shewanella sp. (strain MR-7).